An 869-amino-acid chain; its full sequence is MNSSEIREKFLKFFESKGHTIVASSPLVPGNDPTLMFTNSGMVQFKDVFLGEDKRPYTRATSVQACLRAGGKHNDLENVGYTARHHTFFEMLGNWSFGDYFKRDALKWSWELLTQVYGLPAEKLLATVYIEDDEAFDIWTKEIGLPPERVIRIGDNKGGRYKSDNFWMMADTGPCGPCSEIFYDHGPHIAGGPPGSPDEDGDRFIEIWNNVFMQFDMAEDGSVKPLPAPCVDTGMGLERLAAILQHVHSNYEIDTFEALIKAAGRETNTKDLSNNSLKVIADHIRATAFLVADGVIPSNEGRGYVQRRIIRRAIRHGYKLGQKKPFFHKLVKDLVEQMGEAYPKLKADAQRITDVLKAEEERFFETLANGMEILDAALAGDAKVLPGEVAFKLHDTFGFPLDLSADVCRERGLSVDEAGFAAAMEKQKAAGRAAGKFKMERAVEYTGAGNTFTGYEHLEEQATVVGLYFEGTAVPSLKEGQAGIVVLDTTPFYSESGGQVGDQGFISAEGVQFGVEDTQKIKADVYGHHGVQTQGTLTVGDKVKAAVDGARRAATMRNHSVTHIMHKALREVLGDHVQQKGSLVDPDKTRFDFAHNAPVTREQILEIEKRVNAEILLNSDTQARVMDIESAQKTGALMLFGEKYGETVRVLDIGSSRELCGGTHVSRTGDIGLFKVMSESGVAAGVRRIEAITGAKALGYVQDLEAVIHSAAAMMKTQPAELEPRLAQVLDQMKALEREVGALKGKLASSQGDELLAQAVDVKGIKVLAAVLEGADVATLRNTMDKLKDKLKTAAIVLAAVNDGKVSLIAGVTADSIAKVKAGDLVNFVAQQVGGKGGGKPDMAQAGGTDASGLPTALQGVAAWVGERA.

Positions 559, 563, 660, and 664 each coordinate Zn(2+).

Belongs to the class-II aminoacyl-tRNA synthetase family. Zn(2+) is required as a cofactor.

Its subcellular location is the cytoplasm. It catalyses the reaction tRNA(Ala) + L-alanine + ATP = L-alanyl-tRNA(Ala) + AMP + diphosphate. In terms of biological role, catalyzes the attachment of alanine to tRNA(Ala) in a two-step reaction: alanine is first activated by ATP to form Ala-AMP and then transferred to the acceptor end of tRNA(Ala). Also edits incorrectly charged Ser-tRNA(Ala) and Gly-tRNA(Ala) via its editing domain. In Janthinobacterium sp. (strain Marseille) (Minibacterium massiliensis), this protein is Alanine--tRNA ligase.